A 252-amino-acid chain; its full sequence is 5-oxoprolinase subunit A (252 aa).

This sequence belongs to the LamB/PxpA family. As to quaternary structure, forms a complex composed of PxpA, PxpB and PxpC.

The catalysed reaction is 5-oxo-L-proline + ATP + 2 H2O = L-glutamate + ADP + phosphate + H(+). Its function is as follows. Catalyzes the cleavage of 5-oxoproline to form L-glutamate coupled to the hydrolysis of ATP to ADP and inorganic phosphate. This is 5-oxoprolinase subunit A from Staphylococcus epidermidis (strain ATCC 35984 / DSM 28319 / BCRC 17069 / CCUG 31568 / BM 3577 / RP62A).